Here is a 615-residue protein sequence, read N- to C-terminus: 1-deoxy-D-xylulose-5-phosphate synthase (615 aa).

Residues His72 and Gly111 to Ser113 contribute to the thiamine diphosphate site. A Mg(2+)-binding site is contributed by Asp142. Thiamine diphosphate is bound by residues Gly143–Ala144, Asn171, Tyr278, and Glu360. Residue Asn171 coordinates Mg(2+).

It belongs to the transketolase family. DXPS subfamily. As to quaternary structure, homodimer. It depends on Mg(2+) as a cofactor. The cofactor is thiamine diphosphate.

It catalyses the reaction D-glyceraldehyde 3-phosphate + pyruvate + H(+) = 1-deoxy-D-xylulose 5-phosphate + CO2. The protein operates within metabolic intermediate biosynthesis; 1-deoxy-D-xylulose 5-phosphate biosynthesis; 1-deoxy-D-xylulose 5-phosphate from D-glyceraldehyde 3-phosphate and pyruvate: step 1/1. Catalyzes the acyloin condensation reaction between C atoms 2 and 3 of pyruvate and glyceraldehyde 3-phosphate to yield 1-deoxy-D-xylulose-5-phosphate (DXP). The protein is 1-deoxy-D-xylulose-5-phosphate synthase of Campylobacter jejuni subsp. jejuni serotype O:6 (strain 81116 / NCTC 11828).